A 167-amino-acid polypeptide reads, in one-letter code: Large ribosomal subunit protein bL9 (167 aa).

The protein belongs to the bacterial ribosomal protein bL9 family.

In terms of biological role, binds to the 23S rRNA. In Chlamydia trachomatis serovar L2 (strain ATCC VR-902B / DSM 19102 / 434/Bu), this protein is Large ribosomal subunit protein bL9.